Consider the following 175-residue polypeptide: Protein-export protein SecB (175 aa).

Belongs to the SecB family. As to quaternary structure, homotetramer, a dimer of dimers. One homotetramer interacts with 1 SecA dimer.

The protein resides in the cytoplasm. Functionally, one of the proteins required for the normal export of preproteins out of the cell cytoplasm. It is a molecular chaperone that binds to a subset of precursor proteins, maintaining them in a translocation-competent state. It also specifically binds to its receptor SecA. This Anaplasma marginale (strain Florida) protein is Protein-export protein SecB.